Reading from the N-terminus, the 636-residue chain is Rust resistance kinase Lr10 (636 aa).

The first 24 residues, 1-24 (MSKLLVIALLLLPLINHGIYLATA), serve as a signal peptide directing secretion. The Extracellular portion of the chain corresponds to 25-276 (WDDQDFFKYC…MPDPHGSHIK (252 aa)). N-linked (GlcNAc...) asparagine glycosylation is found at N56, N177, and N222. A helical membrane pass occupies residues 277–297 (VIAATSSVAAFVALLLTVATV). The Cytoplasmic segment spans residues 298–636 (LYLSLKTRYN…FVSSENELMS (339 aa)). Residues 339-628 (RRFKEKVGQG…SLQMPPKPFV (290 aa)) enclose the Protein kinase domain. ATP is bound by residues 345–353 (VGQGGFGSV) and K367. D466 serves as the catalytic Proton acceptor.

It belongs to the protein kinase superfamily. Ser/Thr protein kinase family. Specifically expressed in the aerial parts of the plant.

The protein resides in the cell membrane. It carries out the reaction L-seryl-[protein] + ATP = O-phospho-L-seryl-[protein] + ADP + H(+). It catalyses the reaction L-threonyl-[protein] + ATP = O-phospho-L-threonyl-[protein] + ADP + H(+). This chain is Rust resistance kinase Lr10, found in Triticum aestivum (Wheat).